We begin with the raw amino-acid sequence, 556 residues long: Membrane protein insertase YidC (556 aa).

Residues 7–27 (ILLVALAVVAYLMVLQWNQDY) traverse the membrane as a helical segment. 2 disordered regions span residues 35–59 (ETAQSQPAAPALPDSPSATTEGNAN) and 126–152 (SSERTYEAQSGLIGDGPDKASGRPQYS). Over residues 36–54 (TAQSQPAAPALPDSPSATT) the composition is skewed to low complexity. 4 consecutive transmembrane segments (helical) span residues 365-385 (LLGNWGWSIIVLTIVIKLAFF), 435-455 (LGGCLPILVQMPVFLALYWVL), 468-488 (FWITDLSIKDPYFILPIIMGV), and 513-533 (PIIFTFFFLWFPAGLVLYWVV).

The protein belongs to the OXA1/ALB3/YidC family. Type 1 subfamily. As to quaternary structure, interacts with the Sec translocase complex via SecD. Specifically interacts with transmembrane segments of nascent integral membrane proteins during membrane integration.

It localises to the cell inner membrane. In terms of biological role, required for the insertion and/or proper folding and/or complex formation of integral membrane proteins into the membrane. Involved in integration of membrane proteins that insert both dependently and independently of the Sec translocase complex, as well as at least some lipoproteins. Aids folding of multispanning membrane proteins. The protein is Membrane protein insertase YidC of Stutzerimonas stutzeri (strain A1501) (Pseudomonas stutzeri).